The primary structure comprises 205 residues: Holliday junction branch migration complex subunit RuvA (205 aa).

The segment at 1-64 is domain I; sequence MIGRLKGILI…ENLHQLFGFA (64 aa). Residues 65–143 are domain II; it reads EQRDRSLFRT…NWDLPQGDML (79 aa). The segment at 144-153 is flexible linker; sequence AHGEIQAIAS. The domain III stretch occupies residues 153–205; the sequence is SDNDIYAEAESALIALGYKPVDAAKMVASAAKQKPEARSEELIRIALRSLAGV.

It belongs to the RuvA family. In terms of assembly, homotetramer. Forms an RuvA(8)-RuvB(12)-Holliday junction (HJ) complex. HJ DNA is sandwiched between 2 RuvA tetramers; dsDNA enters through RuvA and exits via RuvB. An RuvB hexamer assembles on each DNA strand where it exits the tetramer. Each RuvB hexamer is contacted by two RuvA subunits (via domain III) on 2 adjacent RuvB subunits; this complex drives branch migration. In the full resolvosome a probable DNA-RuvA(4)-RuvB(12)-RuvC(2) complex forms which resolves the HJ.

It localises to the cytoplasm. The RuvA-RuvB-RuvC complex processes Holliday junction (HJ) DNA during genetic recombination and DNA repair, while the RuvA-RuvB complex plays an important role in the rescue of blocked DNA replication forks via replication fork reversal (RFR). RuvA specifically binds to HJ cruciform DNA, conferring on it an open structure. The RuvB hexamer acts as an ATP-dependent pump, pulling dsDNA into and through the RuvAB complex. HJ branch migration allows RuvC to scan DNA until it finds its consensus sequence, where it cleaves and resolves the cruciform DNA. The sequence is that of Holliday junction branch migration complex subunit RuvA from Cellvibrio japonicus (strain Ueda107) (Pseudomonas fluorescens subsp. cellulosa).